Here is a 634-residue protein sequence, read N- to C-terminus: MDNAVDGLDKASIANSDGPTAGSQTPPFKRKGKLSTIGKIFKPWKWRKKKTSDKFRETSAVLERKISTRQSREELIRRGVLKELPDQDGDVTVNFENSNGHMIPIGEESTREENVVKSEEGNGSVSEKTPPLEEQAEDKKENTENHSETPAAPALPPSAPPKPRPKPKPKKSPVPPKGATAGASHKGDEVPPIKKNTKAPGKQAPVPPPKPASRNTTREAAGSSHSKKTTGSKASASPSTSSTSSRPKASKETVSSKAGTVGTTKGKRKTDKQPITSHLSSDTTTSGTSDLKGEPAETRVESFKLEQTVPGAEEQNTGKFKSMVPPPPVAPAPSPLAPPLPLEDQCITASDTPVVLVSVGADLPVSALDPSQLLWAEEPTNRTTLYSGTGLSVNRENAKCFTTKEELGKTVPQLLTPGLMGESSESFSASEDEGHREYQANDSDSDGPILYTDDEDEDEDEDGSGESALASKIRRRDTLAIKLGNRPSKKELEDKNILQRTSEEERQEIRQQIGTKLVRRLSQRPTTEELEQRNILKQKNEEEEQEAKMELKRRLSRKLSLRPTVAELQARRILRFNEYVEVTDSPDYDRRADKPWARLTPADKAAIRKELNEFKSTEMEVHEESRQFTRFHRP.

4 disordered regions span residues 1-32, 84-344, 412-471, and 485-508; these read MDNA…KRKG, LPDQ…PLED, PQLL…ALAS, and NRPS…ERQE. The N-myristoyl glycine moiety is linked to residue Asp-2. Polar residues predominate over residues 13–26; it reads IANSDGPTAGSQTP. Residue Ser-16 is modified to Phosphoserine. A Phosphothreonine modification is found at Thr-25. Residues 60–85 form an RPEL 1 repeat; it reads AVLERKISTRQSREELIRRGVLKELP. 2 stretches are compositionally biased toward basic and acidic residues: residues 108–120 and 137–147; these read ESTR…KSEE and EDKKENTENHS. The span at 153-162 shows a compositional bias: pro residues; sequence PALPPSAPPK. 2 stretches are compositionally biased toward low complexity: residues 231–247 and 276–290; these read GSKA…SSRP and TSHL…GTSD. Basic and acidic residues predominate over residues 291–304; the sequence is LKGEPAETRVESFK. Residues 324 to 341 are compositionally biased toward pro residues; the sequence is VPPPPVAPAPSPLAPPLP. The residue at position 423 (Ser-423) is a Phosphoserine. Residues 452–464 are compositionally biased toward acidic residues; it reads TDDEDEDEDEDGS. 3 RPEL repeats span residues 477–502, 515–540, and 553–578; these read DTLA…QRTS, TKLV…KQKN, and RRLS…RFNE. Positions 488–508 are enriched in basic and acidic residues; sequence SKKELEDKNILQRTSEEERQE. Phosphoserine is present on residues Ser-522 and Ser-560.

Belongs to the phosphatase and actin regulator family. As to quaternary structure, binds PPP1CA and actin.

It localises to the membrane. The polypeptide is Phosphatase and actin regulator 2 (PHACTR2) (Homo sapiens (Human)).